The primary structure comprises 429 residues: C4-dicarboxylate transport protein (429 aa).

8 helical membrane-spanning segments follow: residues 3–23 (VSIF…GVLL), 44–64 (LIKM…IAGM), 76–96 (IALL…LVVV), 144–164 (AFAS…GFAL), 184–204 (VIFG…FGAM), 222–242 (LILC…GTIA), 331–351 (TLLV…GSGF), and 352–372 (IVLA…LALI).

Belongs to the dicarboxylate/amino acid:cation symporter (DAACS) (TC 2.A.23) family.

Its subcellular location is the cell inner membrane. Responsible for the transport of dicarboxylates such as succinate, fumarate, and malate from the periplasm across the membrane. This chain is C4-dicarboxylate transport protein, found in Yersinia pestis bv. Antiqua (strain Antiqua).